Reading from the N-terminus, the 308-residue chain is RNA pseudouridylate synthase domain-containing protein 1 (308 aa).

Met-1 is modified (N-acetylmethionine). The active site involves Asp-67. Positions 257–292 are disordered; the sequence is APDPDPSEGGPGPCSPCTPLPGPGRPPPPPETEVQR. The span at 269–287 shows a compositional bias: pro residues; the sequence is PCSPCTPLPGPGRPPPPPE.

This sequence belongs to the pseudouridine synthase RluA family.

The polypeptide is RNA pseudouridylate synthase domain-containing protein 1 (RPUSD1) (Bos taurus (Bovine)).